We begin with the raw amino-acid sequence, 128 residues long: Large ribosomal subunit protein bL17 (128 aa).

It belongs to the bacterial ribosomal protein bL17 family. Part of the 50S ribosomal subunit. Contacts protein L32.

This is Large ribosomal subunit protein bL17 from Enterobacter sp. (strain 638).